A 272-amino-acid polypeptide reads, in one-letter code: Tryptophan synthase alpha chain (272 aa).

Active-site proton acceptor residues include Glu49 and Asp60.

It belongs to the TrpA family. As to quaternary structure, tetramer of two alpha and two beta chains.

It carries out the reaction (1S,2R)-1-C-(indol-3-yl)glycerol 3-phosphate + L-serine = D-glyceraldehyde 3-phosphate + L-tryptophan + H2O. The protein operates within amino-acid biosynthesis; L-tryptophan biosynthesis; L-tryptophan from chorismate: step 5/5. Its function is as follows. The alpha subunit is responsible for the aldol cleavage of indoleglycerol phosphate to indole and glyceraldehyde 3-phosphate. The protein is Tryptophan synthase alpha chain of Methylibium petroleiphilum (strain ATCC BAA-1232 / LMG 22953 / PM1).